We begin with the raw amino-acid sequence, 508 residues long: Photosystem II CP47 reaction center protein (508 aa).

The next 6 membrane-spanning stretches (helical) occupy residues 21-36 (SVHIMHTALVAGWAGS), 101-115 (IVFSGLCFLAAIWHW), 140-156 (GIHLFLSGLACFGFGAF), 203-218 (IAAGTLGILAGLFHLS), 237-252 (VLSSSIAAVFFAAFVV), and 457-472 (SFALLFFFGHIWHGAR).

The protein belongs to the PsbB/PsbC family. PsbB subfamily. As to quaternary structure, PSII is composed of 1 copy each of membrane proteins PsbA, PsbB, PsbC, PsbD, PsbE, PsbF, PsbH, PsbI, PsbJ, PsbK, PsbL, PsbM, PsbT, PsbX, PsbY, PsbZ, Psb30/Ycf12, at least 3 peripheral proteins of the oxygen-evolving complex and a large number of cofactors. It forms dimeric complexes. It depends on Binds multiple chlorophylls. PSII binds additional chlorophylls, carotenoids and specific lipids. as a cofactor.

It is found in the plastid. The protein resides in the chloroplast thylakoid membrane. Functionally, one of the components of the core complex of photosystem II (PSII). It binds chlorophyll and helps catalyze the primary light-induced photochemical processes of PSII. PSII is a light-driven water:plastoquinone oxidoreductase, using light energy to abstract electrons from H(2)O, generating O(2) and a proton gradient subsequently used for ATP formation. This Ipomoea purpurea (Common morning glory) protein is Photosystem II CP47 reaction center protein.